The following is a 102-amino-acid chain: Acid shock protein (102 aa).

The signal sequence occupies residues 1–21 (MKKVLALVVAAAMGLSSAAFA). Over residues 22 to 41 (AETATTPAPTATTTKAAPAK) the composition is skewed to low complexity. The propeptide occupies 22 to 58 (AETATTPAPTATTTKAAPAKTTHHKKQHKAAPAQKAQ). The tract at residues 22-102 (AETATTPAPT…PAKPAAQPAA (81 aa)) is disordered. Residues 80-90 (AAKKHAKKHSH) show a composition bias toward basic residues. Residues 91–102 (QQPAKPAAQPAA) show a composition bias toward low complexity.

Belongs to the Asr family. Proteolytic processing gives rise to the active protein.

The protein localises to the periplasm. In terms of biological role, required for growth and/or survival at acidic conditions. The polypeptide is Acid shock protein (Escherichia coli O45:K1 (strain S88 / ExPEC)).